The chain runs to 256 residues: Isoprenyl transferase (256 aa).

Residue Asp33 is part of the active site. Asp33 lines the Mg(2+) pocket. Residues 34-37 (GNGR), Trp38, Arg46, His50, and 78-80 (STE) contribute to the substrate site. Asn81 functions as the Proton acceptor in the catalytic mechanism. Residues Trp82, Arg84, Arg201, and 207-209 (RIS) contribute to the substrate site. Glu220 provides a ligand contact to Mg(2+).

Belongs to the UPP synthase family. As to quaternary structure, homodimer. Mg(2+) serves as cofactor.

Catalyzes the condensation of isopentenyl diphosphate (IPP) with allylic pyrophosphates generating different type of terpenoids. The polypeptide is Isoprenyl transferase (Staphylococcus aureus (strain COL)).